Here is a 211-residue protein sequence, read N- to C-terminus: Protein-L-isoaspartate O-methyltransferase (211 aa).

The active site involves serine 60.

The protein belongs to the methyltransferase superfamily. L-isoaspartyl/D-aspartyl protein methyltransferase family.

Its subcellular location is the cytoplasm. It carries out the reaction [protein]-L-isoaspartate + S-adenosyl-L-methionine = [protein]-L-isoaspartate alpha-methyl ester + S-adenosyl-L-homocysteine. In terms of biological role, catalyzes the methyl esterification of L-isoaspartyl residues in peptides and proteins that result from spontaneous decomposition of normal L-aspartyl and L-asparaginyl residues. It plays a role in the repair and/or degradation of damaged proteins. This is Protein-L-isoaspartate O-methyltransferase from Pseudomonas fluorescens (strain ATCC BAA-477 / NRRL B-23932 / Pf-5).